Consider the following 523-residue polypeptide: MSQQVIIFDTTLRDGEQALQASLSVKEKLQIALALERMGVDVMEVGFPVSSPGDFESVQTIARQVKNSRVCALARCVEKDIDVAAESLKVAEAFRIHTFIATSPMHIATKLRSTLDEVIERAIYMVKRARNYTDDVEFSCEDAGRTPIADLARVVEAAINAGATTINIPDTVGYTMPFEFAGIISGLYERVPNIDKAIISVHTHDDLGLAVGNSLAAVHAGARQVEGAMNGIGERAGNCSLEEVIMAIKVRKDILNVHTAINHQEIWRTSQLVSQICNMPIPANKAIVGSGAFAHSSGIHQDGVLKNRENYEIMTPESIGLNQIQLNLTSRSGRAAVKHRMDEMGYKESEYNLDNLYDAFLKLADKKGQVFDYDLEALAFIGKQQEEPEHFRLDYFSVQSGSNDIATAAVKLACGEEVKAEAANGNGPVDAVYQAINRITDYNVELVKYSLTAKGHGKDALGQVDIVANYNGRRFHGVGLATDIVESSAKAMVHVLNNIWRAAEVEKELQRKAQHNENNKETV.

A Pyruvate carboxyltransferase domain is found at 5–267 (VIIFDTTLRD…HTAINHQEIW (263 aa)). Mn(2+)-binding residues include Asp14, His202, His204, and Asn238. The segment at 392-523 (RLDYFSVQSG…QHNENNKETV (132 aa)) is regulatory domain.

This sequence belongs to the alpha-IPM synthase/homocitrate synthase family. LeuA type 1 subfamily. In terms of assembly, homodimer. Mn(2+) serves as cofactor.

It is found in the cytoplasm. It catalyses the reaction 3-methyl-2-oxobutanoate + acetyl-CoA + H2O = (2S)-2-isopropylmalate + CoA + H(+). It functions in the pathway amino-acid biosynthesis; L-leucine biosynthesis; L-leucine from 3-methyl-2-oxobutanoate: step 1/4. Catalyzes the condensation of the acetyl group of acetyl-CoA with 3-methyl-2-oxobutanoate (2-ketoisovalerate) to form 3-carboxy-3-hydroxy-4-methylpentanoate (2-isopropylmalate). The sequence is that of 2-isopropylmalate synthase from Escherichia coli O45:K1 (strain S88 / ExPEC).